We begin with the raw amino-acid sequence, 227 residues long: MEPAAEKREAEQEELQQQHDEPAVPSADDDEAEAEENERRNRELKAGFHPLRRRFVLWYTRRTPGARSQSYEDNIKKIVDFSTVESFWVCYCHLTRPVSLPSPTDLHLFKEGIRPLWEDPANRSGGKWIIRFKKTVSGRFWEDLVLVLVGDQLDYSDDVCGVVLSVRFNEDILSVWNRNASDHQAVMTLRDSIKRHLKLPHSYLMEYKPHDASLRDNSSYRNTWLRG.

Residues 1–22 (MEPAAEKREAEQEELQQQHDEP) are compositionally biased toward basic and acidic residues. Residues 1-43 (MEPAAEKREAEQEELQQQHDEPAVPSADDDEAEAEENERRNRE) form a disordered region. A compositionally biased stretch (acidic residues) spans 27 to 36 (ADDDEAEAEE).

It belongs to the eukaryotic initiation factor 4E family. EIF4F is a multi-subunit complex, the composition of which varies with external and internal environmental conditions. It is composed of at least EIF4A, EIF4E and EIF4G. EIF4E is also known to interact with other partners. In higher plants two isoforms of EIF4F have been identified, named isoform EIF4F and isoform EIF(iso)4F. Isoform EIF4F has subunits p220 and p26, whereas isoform EIF(iso)4F has subunits p82 and p28.

Its function is as follows. Recognizes and binds the 7-methylguanosine-containing mRNA cap during an early step in the initiation of protein synthesis and facilitates ribosome binding by inducing the unwinding of the mRNAs secondary structures. This Oryza sativa subsp. japonica (Rice) protein is Eukaryotic translation initiation factor NCBP (NCBP).